The following is a 122-amino-acid chain: Large ribosomal subunit protein uL14 (122 aa).

The protein belongs to the universal ribosomal protein uL14 family. In terms of assembly, part of the 50S ribosomal subunit. Forms a cluster with proteins L3 and L19. In the 70S ribosome, L14 and L19 interact and together make contacts with the 16S rRNA in bridges B5 and B8.

Functionally, binds to 23S rRNA. Forms part of two intersubunit bridges in the 70S ribosome. In Pseudoalteromonas translucida (strain TAC 125), this protein is Large ribosomal subunit protein uL14.